The sequence spans 172 residues: R-phycocyanin-2 beta chain (172 aa).

Residue Asn72 is modified to N4-methylasparagine. Cys82 lines the (2R,3E)-phycocyanobilin pocket. Cys153 lines the (2R,3E)-phycoerythrobilin pocket.

It belongs to the phycobiliprotein family. Heterodimer of an alpha and a beta chain. Post-translationally, contains two covalently linked bilin chromophores.

Its subcellular location is the cellular thylakoid membrane. Light-harvesting photosynthetic bile pigment-protein from the phycobiliprotein complex. This Synechococcus sp. (strain WH8020) protein is R-phycocyanin-2 beta chain (rpcB).